The primary structure comprises 605 residues: Elongation factor 4 (605 aa).

Positions 9–192 (SRIRNFCIIA…AIIARVPAPA (184 aa)) constitute a tr-type G domain. Residues 21 to 26 (DHGKST) and 139 to 142 (NKID) contribute to the GTP site.

This sequence belongs to the TRAFAC class translation factor GTPase superfamily. Classic translation factor GTPase family. LepA subfamily.

The protein resides in the cell inner membrane. The catalysed reaction is GTP + H2O = GDP + phosphate + H(+). Required for accurate and efficient protein synthesis under certain stress conditions. May act as a fidelity factor of the translation reaction, by catalyzing a one-codon backward translocation of tRNAs on improperly translocated ribosomes. Back-translocation proceeds from a post-translocation (POST) complex to a pre-translocation (PRE) complex, thus giving elongation factor G a second chance to translocate the tRNAs correctly. Binds to ribosomes in a GTP-dependent manner. This Chlorobium luteolum (strain DSM 273 / BCRC 81028 / 2530) (Pelodictyon luteolum) protein is Elongation factor 4.